Consider the following 543-residue polypeptide: CTP synthase (543 aa).

Residues 1 to 265 (MARYIFITGG…DEEVLAAFGI (265 aa)) form an amidoligase domain region. Ser-13 is a CTP binding site. Ser-13 contacts UTP. 14–19 (SLGKGL) contacts ATP. An L-glutamine-binding site is contributed by Tyr-54. Asp-71 provides a ligand contact to ATP. Positions 71 and 139 each coordinate Mg(2+). Residues 146–148 (DIE), 186–191 (KTKPTQ), and Lys-222 each bind CTP. Residues 186-191 (KTKPTQ) and Lys-222 each bind UTP. 238-240 (RDA) is an ATP binding site. The Glutamine amidotransferase type-1 domain maps to 291–542 (TIAIVGKYTG…IEAAMAQSRL (252 aa)). Gly-353 contacts L-glutamine. Catalysis depends on Cys-380, which acts as the Nucleophile; for glutamine hydrolysis. L-glutamine contacts are provided by residues 381-384 (FGMQ), Glu-404, and Arg-470. Residues His-515 and Glu-517 contribute to the active site.

This sequence belongs to the CTP synthase family. Homotetramer.

It catalyses the reaction UTP + L-glutamine + ATP + H2O = CTP + L-glutamate + ADP + phosphate + 2 H(+). The catalysed reaction is L-glutamine + H2O = L-glutamate + NH4(+). It carries out the reaction UTP + NH4(+) + ATP = CTP + ADP + phosphate + 2 H(+). It functions in the pathway pyrimidine metabolism; CTP biosynthesis via de novo pathway; CTP from UDP: step 2/2. With respect to regulation, allosterically activated by GTP, when glutamine is the substrate; GTP has no effect on the reaction when ammonia is the substrate. The allosteric effector GTP functions by stabilizing the protein conformation that binds the tetrahedral intermediate(s) formed during glutamine hydrolysis. Inhibited by the product CTP, via allosteric rather than competitive inhibition. Catalyzes the ATP-dependent amination of UTP to CTP with either L-glutamine or ammonia as the source of nitrogen. Regulates intracellular CTP levels through interactions with the four ribonucleotide triphosphates. In Rhodopseudomonas palustris (strain BisA53), this protein is CTP synthase.